We begin with the raw amino-acid sequence, 564 residues long: Benomyl/methotrexate resistance protein (564 aa).

Residues 60-101 (IDNQGEPNSSQSSSSNNTIVDNNNNNNNDVDGDKIVVTWDGD) form a disordered region. The segment covering 67–88 (NSSQSSSSNNTIVDNNNNNNND) has biased composition (low complexity). A run of 12 helical transmembrane segments spans residues 116–136 (AFFI…SAVY), 153–173 (VATL…LVFS), 184–204 (TSIY…TALV), 210–229 (LCIL…ATGG), 241–262 (LPVG…GPFF), 274–294 (WTFW…CFTL), 358–374 (IYIA…FEVF), 393–411 (YMSI…IPVI), 431–451 (IPIA…FGWS), 457–476 (HWVG…FLIF), 489–506 (PHYI…RSVI), and 530–551 (WGSS…LFYL).

Belongs to the major facilitator superfamily. CAR1 family.

Its subcellular location is the membrane. In terms of biological role, probable transporter. Confers resistance to benomyl and methotrexate. The polypeptide is Benomyl/methotrexate resistance protein (MDR1) (Candida albicans (Yeast)).